The chain runs to 267 residues: 3-isopropylmalate dehydratase large subunit (267 aa).

Residues Cys146, Cys206, and Cys209 each coordinate [4Fe-4S] cluster.

Belongs to the aconitase/IPM isomerase family. LeuC type 1 subfamily. Heterodimer of LeuC and LeuD. The cofactor is [4Fe-4S] cluster.

The enzyme catalyses (2R,3S)-3-isopropylmalate = (2S)-2-isopropylmalate. The protein operates within amino-acid biosynthesis; L-leucine biosynthesis; L-leucine from 3-methyl-2-oxobutanoate: step 2/4. Functionally, catalyzes the isomerization between 2-isopropylmalate and 3-isopropylmalate, via the formation of 2-isopropylmaleate. This is 3-isopropylmalate dehydratase large subunit (leuC) from Cupriavidus necator (Alcaligenes eutrophus).